We begin with the raw amino-acid sequence, 190 residues long: Elongation factor P-like protein (190 aa).

It belongs to the elongation factor P family.

The chain is Elongation factor P-like protein from Shigella dysenteriae serotype 1 (strain Sd197).